Consider the following 217-residue polypeptide: Adenylate kinase (217 aa).

ATP is bound at residue 10 to 15; that stretch reads GIGKGT. The interval 30 to 59 is NMP; sequence ATGDIFRKNFKENTELGILIKKIIAQGLLV. Residues Thr-31, Arg-36, 57-59, 85-88, and Gln-92 each bind AMP; these read LLV and GFPR. Residues 126-163 are LID; the sequence is GRRICPECGKVYHIENIPPKTPGICDKDQKTLIQREDD. Residue Arg-127 coordinates ATP. Zn(2+) contacts are provided by Cys-130 and Cys-133. Residue 136–137 participates in ATP binding; that stretch reads VY. Zn(2+) contacts are provided by Cys-150 and Asp-153. Residues Arg-160 and Arg-171 each contribute to the AMP site. Gln-199 serves as a coordination point for ATP.

Belongs to the adenylate kinase family. In terms of assembly, monomer.

Its subcellular location is the cytoplasm. The catalysed reaction is AMP + ATP = 2 ADP. It participates in purine metabolism; AMP biosynthesis via salvage pathway; AMP from ADP: step 1/1. Catalyzes the reversible transfer of the terminal phosphate group between ATP and AMP. Plays an important role in cellular energy homeostasis and in adenine nucleotide metabolism. The sequence is that of Adenylate kinase from Onion yellows phytoplasma (strain OY-M).